We begin with the raw amino-acid sequence, 84 residues long: Cell division topological specificity factor (84 aa).

This sequence belongs to the MinE family.

Functionally, prevents the cell division inhibition by proteins MinC and MinD at internal division sites while permitting inhibition at polar sites. This ensures cell division at the proper site by restricting the formation of a division septum at the midpoint of the long axis of the cell. The protein is Cell division topological specificity factor of Cupriavidus metallidurans (strain ATCC 43123 / DSM 2839 / NBRC 102507 / CH34) (Ralstonia metallidurans).